The chain runs to 315 residues: MLISQPPAIFLMGPTASGKTGLAVELVQAMPLEIISVDSALVYQDMDIGTAKPGQEVLQRAPHHLIDVIDPMQVYSAAQFREDALRLMADITARGKAPLLVGGTMLYFRTLEQGLGGLPEADAQVRAELDREAAKIGWPGMHAKLAAIDPETAARLQPADSQRIQRALEVYRLTGKSMTALHRQQAAEILPYRLLKIALQPSDRSVLHARIAERFVAMMKGGLLEEVQGLLKKYPGLHPDMTSMRCVGYRQTLEYLAGNIDDEAWKAQGIAATRQLAKRQLTWLRGMDDTLVLDCLEQDVYGQAQRAISGFLSAV.

13-20 (GPTASGKT) is a binding site for ATP. Substrate is bound at residue 15–20 (TASGKT). Interaction with substrate tRNA stretches follow at residues 38–41 (DSAL), 162–166 (QRIQR), and 245–250 (RCVGYR).

Belongs to the IPP transferase family. As to quaternary structure, monomer. It depends on Mg(2+) as a cofactor.

The enzyme catalyses adenosine(37) in tRNA + dimethylallyl diphosphate = N(6)-dimethylallyladenosine(37) in tRNA + diphosphate. In terms of biological role, catalyzes the transfer of a dimethylallyl group onto the adenine at position 37 in tRNAs that read codons beginning with uridine, leading to the formation of N6-(dimethylallyl)adenosine (i(6)A). The protein is tRNA dimethylallyltransferase of Methylobacillus flagellatus (strain ATCC 51484 / DSM 6875 / VKM B-1610 / KT).